The primary structure comprises 69 residues: DNA gyrase inhibitor YacG (69 aa).

Residues Cys-7, Cys-10, Cys-26, and Cys-30 each coordinate Zn(2+).

This sequence belongs to the DNA gyrase inhibitor YacG family. Interacts with GyrB. The cofactor is Zn(2+).

Inhibits all the catalytic activities of DNA gyrase by preventing its interaction with DNA. Acts by binding directly to the C-terminal domain of GyrB, which probably disrupts DNA binding by the gyrase. This is DNA gyrase inhibitor YacG from Shewanella sp. (strain ANA-3).